Consider the following 1557-residue polypeptide: Target of rapamycin complex 1 subunit KOG1 (1557 aa).

HEAT repeat units follow at residues 548–586 (RHPP…WAVY), 588–625 (SLSI…IDYK), 777–814 (CMNT…GFQD), and 888–925 (RQEI…RYSN). Residues 1084–1098 (SESNSDSDTQSSNTS) show a composition bias toward low complexity. The disordered stretch occupies residues 1084–1114 (SESNSDSDTQSSNTSMKSHTSKKGPSGLYLL). WD repeat units follow at residues 1207–1248 (NNKS…SKFS), 1252–1293 (PFGT…DTFK), 1296–1346 (SAWR…VEVD), 1350–1390 (KTSS…RDSM), 1400–1440 (KQGV…PVES), 1452–1492 (SQQK…NSFK), and 1517–1557 (TSDA…IDYF).

This sequence belongs to the WD repeat RAPTOR family. The target of rapamycin complex 1 (TORC1) is composed of at least KOG1, LST8, TCO89 and either TOR1 (TORC1-A) or TOR2 (TORC1-B). Interacts with PIB2; following activation of PIB2 by glutamine or cysteine. TORC1 binds to and is inhibited by FKBP-rapamycin.

The protein localises to the cell membrane. Its subcellular location is the vacuole membrane. Its function is as follows. Component of TORC1, which regulates multiple cellular processes to control cell growth in response to environmental signals. Nutrient limitation and environmental stress signals cause inactivation of TORC1. Active TORC1 positively controls ribosome biogenesis via control of rRNA, ribosomal protein and tRNA gene expression, and rRNA processing. TORC1 positively controls protein biosynthesis by regulation of mRNA stability, translation initiation factor activity, and high-affinity amino acid permeases that serve to provide amino acids for use by the translation machinery. TORC1 also promotes growth by sequestering a number of nutrient and general stress-responsive transcription factors in the cytoplasm. TORC1 negatively controls macroautophagy, a process to recycle surplus cytoplasmic mass under nutrient starvation conditions. KOG1 may have a role in binding and recruiting substrates of TORC1. In Saccharomyces cerevisiae (strain ATCC 204508 / S288c) (Baker's yeast), this protein is Target of rapamycin complex 1 subunit KOG1 (KOG1).